A 354-amino-acid polypeptide reads, in one-letter code: Divinyl chlorophyll a/b light-harvesting protein PcbG (354 aa).

6 helical membrane-spanning segments follow: residues 27-47, 65-85, 88-108, 201-221, 241-261, and 308-328; these read FIAA…ASTL, IFLA…VWTG, VASV…GALS, VLGG…FHIA, AVLS…AFWC, and LTNV…WHAI.

This sequence belongs to the PsbB/PsbC family. IsiA/Pcb subfamily. The antenna complex consists of divinyl chlorophylls (a and b) and divinyl chlorophyll a/b binding proteins and binds more divinyl chlorophyll b than does the antenna complex from high-light-adapted Prochlorococcus. The cofactor is divinyl chlorophyll a. Divinyl chlorophyll b serves as cofactor.

The protein resides in the cellular thylakoid membrane. The antenna complex functions as a light receptor, it captures and delivers excitation energy to photosystems II and I. The Prochlorales pcb genes are not related to higher plant LHCs. The polypeptide is Divinyl chlorophyll a/b light-harvesting protein PcbG (pcbG) (Prochlorococcus marinus (strain NATL2A)).